The sequence spans 269 residues: Homocitrate synthase subunit alpha (269 aa).

The Pyruvate carboxyltransferase domain occupies Ile-3–Ile-255.

It belongs to the alpha-IPM synthase/homocitrate synthase family. As to quaternary structure, heterodimer of an alpha and an omega chain.

The catalysed reaction is acetyl-CoA + 2-oxoglutarate + H2O = (2R)-homocitrate + CoA + H(+). Its function is as follows. This protein is a Fe-Mo-cofactor biosynthetic component. The protein is Homocitrate synthase subunit alpha (nifV-ALPHA) of Clostridium pasteurianum.